Here is a 159-residue protein sequence, read N- to C-terminus: UPF0303 protein Ping_1243 (159 aa).

The protein belongs to the UPF0303 family.

The sequence is that of UPF0303 protein Ping_1243 from Psychromonas ingrahamii (strain DSM 17664 / CCUG 51855 / 37).